We begin with the raw amino-acid sequence, 247 residues long: Fasciclin-like arabinogalactan protein 13 (247 aa).

The first 25 residues, 1 to 25 (MATTPLLLLLLTAVFLSTEITAQRA), serve as a signal peptide directing secretion. The FAS1 domain maps to 34–179 (PINITAILEK…LAVYVVDMVL (146 aa)). N-linked (GlcNAc...) asparagine glycans are attached at residues Asn36, Asn55, Asn68, Asn141, and Asn150. The segment at 189–228 (KISPMAPPPKSKSPDVSDDSESSKKAAAPSESEKSGSGEM) is disordered. Gly224 is lipidated: GPI-anchor amidated glycine. A propeptide spans 225–247 (SGEMNTGLGLGLGLVVLCLKFLL) (removed in mature form).

This sequence belongs to the fasciclin-like AGP family.

It is found in the cell membrane. May be a cell surface adhesion protein. The sequence is that of Fasciclin-like arabinogalactan protein 13 (FLA13) from Arabidopsis thaliana (Mouse-ear cress).